A 502-amino-acid polypeptide reads, in one-letter code: NADH-quinone oxidoreductase subunit N (502 aa).

The next 14 membrane-spanning stretches (helical) occupy residues 16–36, 47–67, 85–105, 113–133, 138–158, 172–192, 213–233, 248–268, 273–293, 310–330, 337–357, 387–407, 410–430, and 470–490; these read TLVPMLIPIIGALFIIVIDLF, MLSLLILGVDFVALVDSAGVF, LAILSQFIIVGASMLFIPLAL, FSYPEFFALFLFMIAGFQFMV, LILIFVGLETASLALYTLIAM, FTMGALAAGFFSFGSMVFYAL, IGFVLVGVVFLLAAFGFKLSM, SAALAGYMSIVPKIAAFIVAM, FLIHSGVVWLEVILYMGVVVT, MLAYSSISHAGFVMAAILIGT, LFLYWILFSFTNLGSFSMLWI, ASIMALFMLSLAGIPPFALFW, MYLMSSAITGGYTVLALIMAL, and TIIGIAAIGTIFAFVAVNQLI.

It belongs to the complex I subunit 2 family. In terms of assembly, NDH-1 is composed of 14 different subunits. Subunits NuoA, H, J, K, L, M, N constitute the membrane sector of the complex.

The protein localises to the cell inner membrane. It catalyses the reaction a quinone + NADH + 5 H(+)(in) = a quinol + NAD(+) + 4 H(+)(out). Its function is as follows. NDH-1 shuttles electrons from NADH, via FMN and iron-sulfur (Fe-S) centers, to quinones in the respiratory chain. The immediate electron acceptor for the enzyme in this species is believed to be ubiquinone. Couples the redox reaction to proton translocation (for every two electrons transferred, four hydrogen ions are translocated across the cytoplasmic membrane), and thus conserves the redox energy in a proton gradient. The chain is NADH-quinone oxidoreductase subunit N from Sulfurimonas denitrificans (strain ATCC 33889 / DSM 1251) (Thiomicrospira denitrificans (strain ATCC 33889 / DSM 1251)).